Here is a 298-residue protein sequence, read N- to C-terminus: Acetylglutamate kinase (298 aa).

Substrate contacts are provided by residues 69–70 (GG), Arg91, and Asn196.

Belongs to the acetylglutamate kinase family. ArgB subfamily.

Its subcellular location is the cytoplasm. The enzyme catalyses N-acetyl-L-glutamate + ATP = N-acetyl-L-glutamyl 5-phosphate + ADP. The protein operates within amino-acid biosynthesis; L-arginine biosynthesis; N(2)-acetyl-L-ornithine from L-glutamate: step 2/4. Its function is as follows. Catalyzes the ATP-dependent phosphorylation of N-acetyl-L-glutamate. The protein is Acetylglutamate kinase of Nitrobacter hamburgensis (strain DSM 10229 / NCIMB 13809 / X14).